Consider the following 345-residue polypeptide: S-adenosylmethionine:tRNA ribosyltransferase-isomerase (345 aa).

Belongs to the QueA family. In terms of assembly, monomer.

Its subcellular location is the cytoplasm. It catalyses the reaction 7-aminomethyl-7-carbaguanosine(34) in tRNA + S-adenosyl-L-methionine = epoxyqueuosine(34) in tRNA + adenine + L-methionine + 2 H(+). It participates in tRNA modification; tRNA-queuosine biosynthesis. Its function is as follows. Transfers and isomerizes the ribose moiety from AdoMet to the 7-aminomethyl group of 7-deazaguanine (preQ1-tRNA) to give epoxyqueuosine (oQ-tRNA). The chain is S-adenosylmethionine:tRNA ribosyltransferase-isomerase from Shewanella putrefaciens (strain CN-32 / ATCC BAA-453).